The primary structure comprises 109 residues: Tetraspanin-31 (109 aa).

The Cytoplasmic portion of the chain corresponds to 1–12 (MVCGGFACSKNA). The helical transmembrane segment at 13–33 (LCALNVVYMLVGLLLIGVAAW) threads the bilayer. Topologically, residues 34–44 (AKGLGLVSSIH) are extracellular. The chain crosses the membrane as a helical span at residues 45 to 65 (IIGGVIAVGVFLLLIAVAGLV). The Cytoplasmic segment spans residues 66–72 (GAVNHHQ). Residues 73-93 (VLLFFYMIILGLVFIFQFGIS) traverse the membrane as a helical segment. Over 94–109 (CSCLAINLSKQAGIIN) the chain is Extracellular. A glycan (N-linked (GlcNAc...) asparagine) is linked at Asn100.

This sequence belongs to the tetraspanin (TM4SF) family.

Its subcellular location is the membrane. This Sus scrofa (Pig) protein is Tetraspanin-31 (TSPAN31).